A 429-amino-acid chain; its full sequence is Glutamate-1-semialdehyde 2,1-aminomutase (429 aa).

The residue at position 265 (K265) is an N6-(pyridoxal phosphate)lysine.

The protein belongs to the class-III pyridoxal-phosphate-dependent aminotransferase family. HemL subfamily. Homodimer. It depends on pyridoxal 5'-phosphate as a cofactor.

Its subcellular location is the cytoplasm. The enzyme catalyses (S)-4-amino-5-oxopentanoate = 5-aminolevulinate. It functions in the pathway porphyrin-containing compound metabolism; protoporphyrin-IX biosynthesis; 5-aminolevulinate from L-glutamyl-tRNA(Glu): step 2/2. The protein is Glutamate-1-semialdehyde 2,1-aminomutase of Legionella pneumophila (strain Corby).